The chain runs to 83 residues: Large ribosomal subunit protein bL27 (83 aa).

The protein belongs to the bacterial ribosomal protein bL27 family.

The chain is Large ribosomal subunit protein bL27 from Thermotoga neapolitana (strain ATCC 49049 / DSM 4359 / NBRC 107923 / NS-E).